The following is a 145-amino-acid chain: D-aminoacyl-tRNA deacylase (145 aa).

The Gly-cisPro motif, important for rejection of L-amino acids signature appears at 137-138 (GP).

The protein belongs to the DTD family. Homodimer.

It localises to the cytoplasm. It carries out the reaction glycyl-tRNA(Ala) + H2O = tRNA(Ala) + glycine + H(+). The enzyme catalyses a D-aminoacyl-tRNA + H2O = a tRNA + a D-alpha-amino acid + H(+). Functionally, an aminoacyl-tRNA editing enzyme that deacylates mischarged D-aminoacyl-tRNAs. Also deacylates mischarged glycyl-tRNA(Ala), protecting cells against glycine mischarging by AlaRS. Acts via tRNA-based rather than protein-based catalysis; rejects L-amino acids rather than detecting D-amino acids in the active site. By recycling D-aminoacyl-tRNA to D-amino acids and free tRNA molecules, this enzyme counteracts the toxicity associated with the formation of D-aminoacyl-tRNA entities in vivo and helps enforce protein L-homochirality. This Escherichia coli O81 (strain ED1a) protein is D-aminoacyl-tRNA deacylase.